The chain runs to 76 residues: Protein krueppel (76 aa).

2 consecutive C2H2-type zinc fingers follow at residues 11–33 and 39–61; these read FECS…LRLH and YSCP…LRVH.

This sequence belongs to the krueppel C2H2-type zinc-finger protein family.

It localises to the nucleus. Functionally, krueppel is a gap class segmentation protein. The protein is Protein krueppel (Kr) of Manduca sexta (Tobacco hawkmoth).